Here is a 139-residue protein sequence, read N- to C-terminus: MLIPKRTKYRKQHRPDRHGMSKGGNEINFGDFAIQALAPAYVTNRQIEAARIAMTRYIKRGGKVWITIFPDRPLTKHPLGARMGSGKGTPEFWIANVHPGRVMFEIGGVSEDVAREALRRAIDKLPMKCRVIAREGGDI.

A compositionally biased stretch (basic residues) spans 1–16 (MLIPKRTKYRKQHRPD). The tract at residues 1–23 (MLIPKRTKYRKQHRPDRHGMSKG) is disordered.

Belongs to the universal ribosomal protein uL16 family. In terms of assembly, part of the 50S ribosomal subunit.

Functionally, binds 23S rRNA and is also seen to make contacts with the A and possibly P site tRNAs. This is Large ribosomal subunit protein uL16 from Bifidobacterium animalis subsp. lactis (strain AD011).